A 77-amino-acid polypeptide reads, in one-letter code: Acyl carrier protein (77 aa).

Positions 1–76 (MSLEDDVKAI…DVIKYIQEHQ (76 aa)) constitute a Carrier domain. An O-(pantetheine 4'-phosphoryl)serine modification is found at serine 36.

The protein belongs to the acyl carrier protein (ACP) family. Post-translationally, 4'-phosphopantetheine is transferred from CoA to a specific serine of apo-ACP by AcpS. This modification is essential for activity because fatty acids are bound in thioester linkage to the sulfhydryl of the prosthetic group.

It is found in the cytoplasm. Its pathway is lipid metabolism; fatty acid biosynthesis. Carrier of the growing fatty acid chain in fatty acid biosynthesis. The polypeptide is Acyl carrier protein (Chlamydia trachomatis serovar L2 (strain ATCC VR-902B / DSM 19102 / 434/Bu)).